Reading from the N-terminus, the 364-residue chain is Anthranilate phosphoribosyltransferase (364 aa).

5-phospho-alpha-D-ribose 1-diphosphate contacts are provided by residues Gly-101, 104–105 (GD), Thr-109, 111–114 (NLST), 129–137 (KHGNRAASS), and Gly-141. Gly-101 is a binding site for anthranilate. Ser-113 contributes to the Mg(2+) binding site. Asn-132 lines the anthranilate pocket. An anthranilate-binding site is contributed by Arg-187. Residues Asp-245 and Glu-246 each contribute to the Mg(2+) site.

It belongs to the anthranilate phosphoribosyltransferase family. As to quaternary structure, homodimer. Mg(2+) serves as cofactor.

It catalyses the reaction N-(5-phospho-beta-D-ribosyl)anthranilate + diphosphate = 5-phospho-alpha-D-ribose 1-diphosphate + anthranilate. Its pathway is amino-acid biosynthesis; L-tryptophan biosynthesis; L-tryptophan from chorismate: step 2/5. Catalyzes the transfer of the phosphoribosyl group of 5-phosphorylribose-1-pyrophosphate (PRPP) to anthranilate to yield N-(5'-phosphoribosyl)-anthranilate (PRA). This is Anthranilate phosphoribosyltransferase from Mycolicibacterium gilvum (strain PYR-GCK) (Mycobacterium gilvum (strain PYR-GCK)).